We begin with the raw amino-acid sequence, 206 residues long: Outer-membrane lipoprotein carrier protein (206 aa).

The N-terminal stretch at 1 to 21 (MTRLLFVLVLSVCLLPVPVKA) is a signal peptide.

The protein belongs to the LolA family. In terms of assembly, monomer.

It is found in the periplasm. Its function is as follows. Participates in the translocation of lipoproteins from the inner membrane to the outer membrane. Only forms a complex with a lipoprotein if the residue after the N-terminal Cys is not an aspartate (The Asp acts as a targeting signal to indicate that the lipoprotein should stay in the inner membrane). The protein is Outer-membrane lipoprotein carrier protein of Nitrosomonas europaea (strain ATCC 19718 / CIP 103999 / KCTC 2705 / NBRC 14298).